The following is a 111-amino-acid chain: Putative lipid-binding protein AIR1 (111 aa).

The N-terminal stretch at 1–23 is a signal peptide; sequence MAPRTPLALFVSLNLLFFTYTSA. Cystine bridges form between Cys28-Cys58, Cys38-Cys57, and Cys74-Cys110.

It belongs to the plant LTP family. PEARLI1 subfamily.

The protein localises to the secreted. This is Putative lipid-binding protein AIR1 (AIR1) from Arabidopsis thaliana (Mouse-ear cress).